The sequence spans 151 residues: Endolysin (151 aa).

Zn(2+) contacts are provided by His18, His123, and Cys131.

It belongs to the N-acetylmuramoyl-L-alanine amidase 2 family. In terms of assembly, interacts with the viral RNA polymerase. It depends on Zn(2+) as a cofactor.

The protein resides in the host cytoplasm. It carries out the reaction Hydrolyzes the link between N-acetylmuramoyl residues and L-amino acid residues in certain cell-wall glycopeptides.. Binding to the viral RNA polymerase inhibits amidase activity. Functionally, endolysin with amidase activity that degrades host peptidoglycans and participates with the holin and spanin proteins in the sequential events which lead to the programmed host cell lysis releasing the mature viral particles. Once the holin has permeabilized the host cell membrane, the endolysin can reach the periplasm and breaking down the peptidoglycan layer. Its function is as follows. Plays an important role in the switch between viral transcription and genome replication. Once produced in sufficient amount, interacts with and inhibits the viral RNA polymerase that becomes unable to produce additional late transcripts. This lysozyme-polymerase complex in turn plays an active role in viral genome replication and packaging. The sequence is that of Endolysin from Klebsiella pneumoniae (Bacteriophage KP32).